Reading from the N-terminus, the 1050-residue chain is Sentrin-specific protease 7 (1050 aa).

Disordered regions lie at residues 1–28 (MDKR…SSDL), 183–288 (PPVT…DVKY), and 304–365 (RRLR…KSDF). 4 positions are modified to phosphoserine: Ser11, Ser12, Ser13, and Ser25. Residues 196–211 (LQSEQLSSSSDGSLES) show a composition bias toward low complexity. A compositionally biased stretch (polar residues) spans 259–271 (ISDTQPEDLNSGS). Positions 273–288 (GCDHLEQESRNKDVKY) are enriched in basic and acidic residues. Residues 310–320 (LPDSQYCTSLD) are compositionally biased toward polar residues. Basic and acidic residues-rich tracts occupy residues 321 to 331 (KSTEQTKKQED) and 338 to 365 (EFEK…KSDF). Phosphoserine occurs at positions 373, 433, 443, and 444. A disordered region spans residues 443-476 (SSDEEGPVEHKSSEILKLQSKQDRETTNENESTS). The span at 449-469 (PVEHKSSEILKLQSKQDRETT) shows a compositional bias: basic and acidic residues. Residues 760 to 1050 (LGVTNEDLEC…HLQQQKGSSS (291 aa)) form a protease region. Active-site residues include His860 and Asp939. The active-site Nucleophile is the Cys992.

It belongs to the peptidase C48 family.

The protein resides in the cytoplasm. Protease that acts as a positive regulator of the cGAS-STING pathway by catalyzing desumoylation of CGAS. Desumoylation of CGAS promotes DNA-binding activity of CGAS, subsequent oligomerization and activation. Deconjugates SUMO2 and SUMO3 from targeted proteins, but not SUMO1. Catalyzes the deconjugation of poly-SUMO2 and poly-SUMO3 chains. Has very low efficiency in processing full-length SUMO proteins to their mature forms. The protein is Sentrin-specific protease 7 of Homo sapiens (Human).